Consider the following 638-residue polypeptide: ATP-dependent zinc metalloprotease FtsH (638 aa).

The Cytoplasmic segment spans residues 1–11; sequence MSQKGKNKKWR. A helical transmembrane segment spans residues 12-32; the sequence is SAGLYALLAIVLISLATTFLG. Residues 33-114 lie on the Lumenal side of the membrane; it reads NRPPERLEIS…LAVRPVQEEG (82 aa). Residues 115-135 traverse the membrane as a helical segment; that stretch reads LLGRILSTFFLPVLLLLGLFF. The Cytoplasmic portion of the chain corresponds to 136–638; it reads LLRRAQNGPG…TLPMAVNAGA (503 aa). 209–216 contacts ATP; sequence GPPGTGKT. H431 lines the Zn(2+) pocket. E432 is a catalytic residue. Zn(2+) is bound by residues H435 and D510.

In the central section; belongs to the AAA ATPase family. This sequence in the C-terminal section; belongs to the peptidase M41 family. Homohexamer. It depends on Zn(2+) as a cofactor.

It localises to the cellular thylakoid membrane. Acts as a processive, ATP-dependent zinc metallopeptidase for both cytoplasmic and membrane proteins. Plays a role in the quality control of integral membrane proteins. The polypeptide is ATP-dependent zinc metalloprotease FtsH (Synechococcus sp. (strain JA-2-3B'a(2-13)) (Cyanobacteria bacterium Yellowstone B-Prime)).